Consider the following 1311-residue polypeptide: Nephrocystin-3 (1311 aa).

Residues 81-183 (SKNNEIASMQ…LQRLQAQGIQ (103 aa)) are a coiled coil. 9 TPR repeats span residues 889–923 (LSYWQLVGKDKISMASEYFDALKQYERSCEGEEKM), 927–960 (ADLYETLGRFLKDLGLLSQAVTPLQRSLEIRETA), 969–1002 (AQSLHQLAGVYVQSKKFGNAEQLYKQALEISENA), 1011–1044 (ARELDALAVLYQKQNKFEQAEQLRKKSLKIRQKS), 1077–1110 (ARTLNELGVLYYLQNNLETAETFLKRSLEMRERV), 1119–1152 (AQSINNLAALYNEKKQYDKAEELYERALDIRRRA), 1161–1194 (AYTVKHLAVLYKRKGKLDKAVPLYELAVEIRQKS), 1203–1236 (ATALVNLAVLYCQMKKQAEASPLYERAMKIYEDS), and 1245–1278 (GETLKNLAVLRYEEGDFEKAAELYKRAMEIKETE).

Its subcellular location is the cell projection. It localises to the cilium. In terms of biological role, required for normal ciliary development and function. Inhibits disheveled-1-induced canonical Wnt-signaling activity and may also play a role in the control of non-canonical Wnt signaling that regulates planar cell polarity. Probably acts as a molecular switch between different Wnt signaling pathways. Required for proper convergent extension cell movements. The sequence is that of Nephrocystin-3 (nphp3) from Xenopus tropicalis (Western clawed frog).